The following is a 492-amino-acid chain: N-succinylglutamate 5-semialdehyde dehydrogenase (492 aa).

An NAD(+)-binding site is contributed by 220-225; that stretch reads GSANTG. Active-site residues include glutamate 243 and cysteine 277.

It belongs to the aldehyde dehydrogenase family. AstD subfamily.

The enzyme catalyses N-succinyl-L-glutamate 5-semialdehyde + NAD(+) + H2O = N-succinyl-L-glutamate + NADH + 2 H(+). It functions in the pathway amino-acid degradation; L-arginine degradation via AST pathway; L-glutamate and succinate from L-arginine: step 4/5. Catalyzes the NAD-dependent reduction of succinylglutamate semialdehyde into succinylglutamate. The polypeptide is N-succinylglutamate 5-semialdehyde dehydrogenase (Escherichia coli (strain SE11)).